The primary structure comprises 506 residues: ATP synthase subunit alpha (506 aa).

170–177 (GDRQTGKT) lines the ATP pocket.

It belongs to the ATPase alpha/beta chains family. F-type ATPases have 2 components, CF(1) - the catalytic core - and CF(0) - the membrane proton channel. CF(1) has five subunits: alpha(3), beta(3), gamma(1), delta(1), epsilon(1). CF(0) has four main subunits: a(1), b(1), b'(1) and c(9-12).

Its subcellular location is the cellular thylakoid membrane. The catalysed reaction is ATP + H2O + 4 H(+)(in) = ADP + phosphate + 5 H(+)(out). In terms of biological role, produces ATP from ADP in the presence of a proton gradient across the membrane. The alpha chain is a regulatory subunit. This is ATP synthase subunit alpha from Synechococcus sp. (strain CC9605).